A 904-amino-acid polypeptide reads, in one-letter code: Phosphoenolpyruvate carboxylase (904 aa).

Active-site residues include His151 and Lys570.

The protein belongs to the PEPCase type 1 family. It depends on Mg(2+) as a cofactor.

The enzyme catalyses oxaloacetate + phosphate = phosphoenolpyruvate + hydrogencarbonate. Its function is as follows. Forms oxaloacetate, a four-carbon dicarboxylic acid source for the tricarboxylic acid cycle. The polypeptide is Phosphoenolpyruvate carboxylase (Xanthomonas campestris pv. campestris (strain ATCC 33913 / DSM 3586 / NCPPB 528 / LMG 568 / P 25)).